The primary structure comprises 131 residues: uncharacterized protein (131 aa).

It localises to the mitochondrion. This is an uncharacterized protein from Arabidopsis thaliana (Mouse-ear cress).